Reading from the N-terminus, the 376-residue chain is Growth/differentiation factor 8 (376 aa).

Positions 1-24 are cleaved as a signal peptide; the sequence is MMQKLQMYVYIYLFMLIAAGPVDL. Positions 25–267 are excised as a propeptide; sequence NEGSEREENV…VTDTPKRSRR (243 aa). N-linked (GlcNAc...) asparagine glycosylation occurs at N72. Disulfide bonds link C273-C283, C282-C341, C310-C373, and C314-C375.

Belongs to the TGF-beta family. Homodimer; disulfide-linked. Interacts with WFIKKN2, leading to inhibit its activity. Interacts with FSTL3. In terms of processing, synthesized as large precursor molecule that undergoes proteolytic cleavage to generate an N-terminal propeptide and a disulfide linked C-terminal dimer, which is the biologically active molecule. The circulating form consists of a latent complex of the C-terminal dimer and other proteins, including its propeptide, which maintain the C-terminal dimer in a latent, inactive state. Ligand activation requires additional cleavage of the prodomain by a tolloid-like metalloproteinase. As to expression, expressed specifically in developing and adult skeletal muscle. Weak expression in adipose tissue.

Its subcellular location is the secreted. Its function is as follows. Acts specifically as a negative regulator of skeletal muscle growth. The protein is Growth/differentiation factor 8 (Mstn) of Mus musculus (Mouse).